A 339-amino-acid chain; its full sequence is Methionyl-tRNA formyltransferase (339 aa).

110–113 contacts (6S)-5,6,7,8-tetrahydrofolate; that stretch reads SLLP.

Belongs to the Fmt family.

It carries out the reaction L-methionyl-tRNA(fMet) + (6R)-10-formyltetrahydrofolate = N-formyl-L-methionyl-tRNA(fMet) + (6S)-5,6,7,8-tetrahydrofolate + H(+). Its function is as follows. Attaches a formyl group to the free amino group of methionyl-tRNA(fMet). The formyl group appears to play a dual role in the initiator identity of N-formylmethionyl-tRNA by promoting its recognition by IF2 and preventing the misappropriation of this tRNA by the elongation apparatus. This is Methionyl-tRNA formyltransferase from Prochlorococcus marinus (strain MIT 9211).